The sequence spans 66 residues: U1-theraphotoxin-Cg1d 2 (66 aa).

The N-terminal stretch at 1–21 (MKMSALFPIFGLPLLFCNSFA) is a signal peptide. The propeptide occupies 22–29 (AELKATGR). Disulfide bonds link cysteine 31–cysteine 46, cysteine 38–cysteine 51, and cysteine 45–cysteine 58. Proline 63 carries the proline amide modification.

It belongs to the neurotoxin 10 (Hwtx-1) family. 46 (Jztx-7/10/12) subfamily. Expressed by the venom gland.

It localises to the secreted. Its function is as follows. Probable ion channel inhibitor. The protein is U1-theraphotoxin-Cg1d 2 of Chilobrachys guangxiensis (Chinese earth tiger tarantula).